A 306-amino-acid polypeptide reads, in one-letter code: Curved DNA-binding protein (306 aa).

A J domain is found at 5 to 69; the sequence is DYYAIMGVKP…QRRAEYDQMW (65 aa).

It localises to the cytoplasm. Its subcellular location is the nucleoid. In terms of biological role, DNA-binding protein that preferentially recognizes a curved DNA sequence. It is probably a functional analog of DnaJ; displays overlapping activities with DnaJ, but functions under different conditions, probably acting as a molecular chaperone in an adaptive response to environmental stresses other than heat shock. Lacks autonomous chaperone activity; binds native substrates and targets them for recognition by DnaK. Its activity is inhibited by the binding of CbpM. The sequence is that of Curved DNA-binding protein from Escherichia coli O7:K1 (strain IAI39 / ExPEC).